The following is a 67-amino-acid chain: Islet amyloid polypeptide (67 aa).

An N-terminal signal peptide occupies residues 1-22 (MCILKLPIVLLVLSVAVNHLQA). Residues 23 to 31 (SPVESHQVE) constitute a propeptide that is removed on maturation. C35 and C40 form a disulfide bridge.

This sequence belongs to the calcitonin family. In terms of assembly, can form homodimers. Interacts with IDE and INS. Interaction with INS inhibits homodimerization and fibril formation.

It localises to the secreted. In terms of biological role, amylin/IAPP is a glucoregulatory peptide hormone that plays an important role in the regulation of energy homeostasis. Selectively inhibits insulin-stimulated glucose utilization and glycogen deposition in muscle, while not affecting adipocyte glucose metabolism. IAPP function is mediated by the CALCR-RAMPs (AMYRs) receptor complexes. Amylin can also bind CALCR receptor in the absence of RAMPs, although it is more selective for AMYRs. This is Islet amyloid polypeptide (IAPP) from Oryctolagus cuniculus (Rabbit).